Here is a 557-residue protein sequence, read N- to C-terminus: Formate--tetrahydrofolate ligase (557 aa).

65-72 contributes to the ATP binding site; sequence TPAGEGKT.

The protein belongs to the formate--tetrahydrofolate ligase family. In terms of assembly, homotetramer.

The catalysed reaction is (6S)-5,6,7,8-tetrahydrofolate + formate + ATP = (6R)-10-formyltetrahydrofolate + ADP + phosphate. It functions in the pathway one-carbon metabolism; tetrahydrofolate interconversion. In Methylorubrum extorquens (strain ATCC 14718 / DSM 1338 / JCM 2805 / NCIMB 9133 / AM1) (Methylobacterium extorquens), this protein is Formate--tetrahydrofolate ligase (fhs).